Consider the following 182-residue polypeptide: ATP synthase subunit delta (182 aa).

This sequence belongs to the ATPase delta chain family. As to quaternary structure, F-type ATPases have 2 components, F(1) - the catalytic core - and F(0) - the membrane proton channel. F(1) has five subunits: alpha(3), beta(3), gamma(1), delta(1), epsilon(1). CF(0) has four main subunits: a(1), b(1), b'(1) and c(10-14). The alpha and beta chains form an alternating ring which encloses part of the gamma chain. F(1) is attached to F(0) by a central stalk formed by the gamma and epsilon chains, while a peripheral stalk is formed by the delta, b and b' chains.

The protein resides in the cellular thylakoid membrane. In terms of biological role, f(1)F(0) ATP synthase produces ATP from ADP in the presence of a proton or sodium gradient. F-type ATPases consist of two structural domains, F(1) containing the extramembraneous catalytic core and F(0) containing the membrane proton channel, linked together by a central stalk and a peripheral stalk. During catalysis, ATP synthesis in the catalytic domain of F(1) is coupled via a rotary mechanism of the central stalk subunits to proton translocation. Its function is as follows. This protein is part of the stalk that links CF(0) to CF(1). It either transmits conformational changes from CF(0) to CF(1) or is implicated in proton conduction. This is ATP synthase subunit delta from Prochlorococcus marinus (strain MIT 9211).